The chain runs to 392 residues: Cytochrome b (392 aa).

Helical transmembrane passes span 38-58 (FGSL…FLAM), 82-104 (WLLR…LHIF), 119-139 (VRCL…TGYV), and 185-205 (FFSL…LHLA). Heme b is bound by residues His-88 and His-102. Heme b contacts are provided by His-189 and His-203. His-208 serves as a coordination point for a ubiquinone. A run of 4 helical transmembrane segments spans residues 231-251 (FYVK…IWIF), 295-315 (SGGV…PFFK), 327-347 (IHQG…WIGC), and 354-373 (FVTI…AITP).

This sequence belongs to the cytochrome b family. As to quaternary structure, the main subunits of complex b-c1 are: cytochrome b, cytochrome c1 and the Rieske protein. The cofactor is heme b.

The protein localises to the mitochondrion inner membrane. In terms of biological role, component of the ubiquinol-cytochrome c reductase complex (complex III or cytochrome b-c1 complex) that is part of the mitochondrial respiratory chain. The b-c1 complex mediates electron transfer from ubiquinol to cytochrome c. Contributes to the generation of a proton gradient across the mitochondrial membrane that is then used for ATP synthesis. The polypeptide is Cytochrome b (MT-CYB) (Pisum sativum (Garden pea)).